Here is a 156-residue protein sequence, read N- to C-terminus: Ribonuclease pancreatic (156 aa).

The signal sequence occupies residues 1-28 (MALEKSLVLLPLLVLILLVLGWVQPSLG). Residues 33-43 (AKKFQRQHVDS) are compositionally biased toward basic and acidic residues. A disordered region spans residues 33–53 (AKKFQRQHVDSDSSPSSSSTY). K35 and R38 together coordinate substrate. H40 serves as the catalytic Proton acceptor. 4 disulfide bridges follow: C54/C112, C68/C123, C86/C138, and C93/C100. Residue N62 is glycosylated (N-linked (GlcNAc...) asparagine). Substrate contacts are provided by residues 69–73 (KPVNT) and K94. N104 is a glycosylation site (N-linked (GlcNAc...) asparagine). Substrate is bound at residue R113. N-linked (GlcNAc...) asparagine glycosylation is present at N116. H147 (proton donor) is an active-site residue.

The protein belongs to the pancreatic ribonuclease family. In terms of assembly, monomer. Interacts with and forms tight 1:1 complexes with RNH1. Dimerization of two such complexes may occur. Interaction with RNH1 inhibits this protein. As to expression, pancreas and other tissues and body fluids (indicating it may have other physiological functions besides its role in digestion).

Its subcellular location is the secreted. The catalysed reaction is an [RNA] containing cytidine + H2O = an [RNA]-3'-cytidine-3'-phosphate + a 5'-hydroxy-ribonucleotide-3'-[RNA].. The enzyme catalyses an [RNA] containing uridine + H2O = an [RNA]-3'-uridine-3'-phosphate + a 5'-hydroxy-ribonucleotide-3'-[RNA].. In terms of biological role, endonuclease that catalyzes the cleavage of RNA on the 3' side of pyrimidine nucleotides. Acts on single-stranded and double-stranded RNA. In Pan troglodytes (Chimpanzee), this protein is Ribonuclease pancreatic (RNASE1).